Consider the following 279-residue polypeptide: Large ribosomal subunit protein uL2 (279 aa).

The interval 216-279 is disordered; it reads KRPSVRGVVM…IQKRKRNRNR (64 aa). Basic residues predominate over residues 270 to 279; sequence IQKRKRNRNR.

Belongs to the universal ribosomal protein uL2 family. In terms of assembly, part of the 50S ribosomal subunit. Forms a bridge to the 30S subunit in the 70S ribosome.

One of the primary rRNA binding proteins. Required for association of the 30S and 50S subunits to form the 70S ribosome, for tRNA binding and peptide bond formation. It has been suggested to have peptidyltransferase activity; this is somewhat controversial. Makes several contacts with the 16S rRNA in the 70S ribosome. The chain is Large ribosomal subunit protein uL2 from Leptospira interrogans serogroup Icterohaemorrhagiae serovar copenhageni (strain Fiocruz L1-130).